Here is a 230-residue protein sequence, read N- to C-terminus: MRVAVIVFPGSNADVDLFNAVEDVMGVPVDYVWHSDTDLSKYDAILLPGGFSYGDYLRCGAVARFSPVMEQVVKAADEGKLIMGICNGFQILTEVGLLPGALLRNRSLKFRCKLSELRVENNDTSFTRDFAAGEVIQIPIAHGEGNYYCDEETLAKLKANKQIVFRYHGENPNGSLEDIAGICNERGNVLGMMPHPERAVHSWMTSDDGRRMFTSILKTWREQNSVTTHA.

Residues 2–226 enclose the Glutamine amidotransferase type-1 domain; that stretch reads RVAVIVFPGS…LKTWREQNSV (225 aa). C86 acts as the Nucleophile in catalysis. Catalysis depends on residues H195 and E197.

Part of the FGAM synthase complex composed of 1 PurL, 1 PurQ and 2 PurS subunits.

Its subcellular location is the cytoplasm. It catalyses the reaction N(2)-formyl-N(1)-(5-phospho-beta-D-ribosyl)glycinamide + L-glutamine + ATP + H2O = 2-formamido-N(1)-(5-O-phospho-beta-D-ribosyl)acetamidine + L-glutamate + ADP + phosphate + H(+). It carries out the reaction L-glutamine + H2O = L-glutamate + NH4(+). Its pathway is purine metabolism; IMP biosynthesis via de novo pathway; 5-amino-1-(5-phospho-D-ribosyl)imidazole from N(2)-formyl-N(1)-(5-phospho-D-ribosyl)glycinamide: step 1/2. Functionally, part of the phosphoribosylformylglycinamidine synthase complex involved in the purines biosynthetic pathway. Catalyzes the ATP-dependent conversion of formylglycinamide ribonucleotide (FGAR) and glutamine to yield formylglycinamidine ribonucleotide (FGAM) and glutamate. The FGAM synthase complex is composed of three subunits. PurQ produces an ammonia molecule by converting glutamine to glutamate. PurL transfers the ammonia molecule to FGAR to form FGAM in an ATP-dependent manner. PurS interacts with PurQ and PurL and is thought to assist in the transfer of the ammonia molecule from PurQ to PurL. This is Phosphoribosylformylglycinamidine synthase subunit PurQ from Brevibacillus brevis (strain 47 / JCM 6285 / NBRC 100599).